The sequence spans 96 residues: Pterin-4-alpha-carbinolamine dehydratase (96 aa).

It belongs to the pterin-4-alpha-carbinolamine dehydratase family.

It localises to the spore wall. The enzyme catalyses (4aS,6R)-4a-hydroxy-L-erythro-5,6,7,8-tetrahydrobiopterin = (6R)-L-erythro-6,7-dihydrobiopterin + H2O. Its function is as follows. Has a role in spore wall formation. The polypeptide is Pterin-4-alpha-carbinolamine dehydratase (omt2) (Schizosaccharomyces pombe (strain 972 / ATCC 24843) (Fission yeast)).